The sequence spans 297 residues: D-aminoacyl-tRNA deacylase (297 aa).

This sequence belongs to the DtdA deacylase family. Monomer. Requires Zn(2+) as cofactor.

It catalyses the reaction a D-aminoacyl-tRNA + H2O = a tRNA + a D-alpha-amino acid + H(+). The enzyme catalyses glycyl-tRNA(Ala) + H2O = tRNA(Ala) + glycine + H(+). Its function is as follows. D-aminoacyl-tRNA deacylase with broad substrate specificity. By recycling D-aminoacyl-tRNA to D-amino acids and free tRNA molecules, this enzyme counteracts the toxicity associated with the formation of D-aminoacyl-tRNA entities in vivo. This chain is D-aminoacyl-tRNA deacylase, found in Methanosarcina mazei (strain ATCC BAA-159 / DSM 3647 / Goe1 / Go1 / JCM 11833 / OCM 88) (Methanosarcina frisia).